Reading from the N-terminus, the 257-residue chain is Deoxyribose-phosphate aldolase (257 aa).

The Proton donor/acceptor role is filled by Asp102. Lys166 functions as the Schiff-base intermediate with acetaldehyde in the catalytic mechanism. Residue Lys198 is the Proton donor/acceptor of the active site.

Belongs to the DeoC/FbaB aldolase family. DeoC type 2 subfamily.

The protein localises to the cytoplasm. The enzyme catalyses 2-deoxy-D-ribose 5-phosphate = D-glyceraldehyde 3-phosphate + acetaldehyde. It functions in the pathway carbohydrate degradation; 2-deoxy-D-ribose 1-phosphate degradation; D-glyceraldehyde 3-phosphate and acetaldehyde from 2-deoxy-alpha-D-ribose 1-phosphate: step 2/2. Catalyzes a reversible aldol reaction between acetaldehyde and D-glyceraldehyde 3-phosphate to generate 2-deoxy-D-ribose 5-phosphate. This is Deoxyribose-phosphate aldolase from Shewanella woodyi (strain ATCC 51908 / MS32).